Reading from the N-terminus, the 188-residue chain is Mitochondrial import inner membrane translocase subunit TIM23-2 (188 aa).

4 helical membrane-spanning segments follow: residues 64 to 84 (TGTA…ITGV), 112 to 131 (GNRI…GIVA), 138 to 154 (VWTS…VCRA), and 161 to 178 (AAVA…VVAG).

It belongs to the Tim17/Tim22/Tim23 family. Homomultimer. Component of the TIM17:23 complex at least composed of TIM23, TIM17 and TIM50. The complex interacts with the TIM44 component of the PAM complex. Also part of the NADH-ubiquinone oxidoreductase complex I. Interacts with OEP163, TIM17-2, TIM21, TIM50 and MPPA2. Expressed in roots and young cotyledons. Detected in leaves and flowers.

It is found in the mitochondrion inner membrane. Functionally, essential component of the TIM17:23 complex, a complex that mediates the translocation of transit peptide-containing proteins across the mitochondrial inner membrane. Links the inner and outer membranes. This chain is Mitochondrial import inner membrane translocase subunit TIM23-2 (TIM23-2), found in Arabidopsis thaliana (Mouse-ear cress).